Consider the following 327-residue polypeptide: Lipoyl synthase (327 aa).

Residues Cys66, Cys71, Cys77, Cys92, Cys96, Cys99, and Ser306 each coordinate [4Fe-4S] cluster. The 218-residue stretch at 78 to 295 folds into the Radical SAM core domain; the sequence is FSKGTATFMI…EKEAYELGFS (218 aa).

The protein belongs to the radical SAM superfamily. Lipoyl synthase family. It depends on [4Fe-4S] cluster as a cofactor.

The protein resides in the cytoplasm. It carries out the reaction [[Fe-S] cluster scaffold protein carrying a second [4Fe-4S](2+) cluster] + N(6)-octanoyl-L-lysyl-[protein] + 2 oxidized [2Fe-2S]-[ferredoxin] + 2 S-adenosyl-L-methionine + 4 H(+) = [[Fe-S] cluster scaffold protein] + N(6)-[(R)-dihydrolipoyl]-L-lysyl-[protein] + 4 Fe(3+) + 2 hydrogen sulfide + 2 5'-deoxyadenosine + 2 L-methionine + 2 reduced [2Fe-2S]-[ferredoxin]. It functions in the pathway protein modification; protein lipoylation via endogenous pathway; protein N(6)-(lipoyl)lysine from octanoyl-[acyl-carrier-protein]: step 2/2. Functionally, catalyzes the radical-mediated insertion of two sulfur atoms into the C-6 and C-8 positions of the octanoyl moiety bound to the lipoyl domains of lipoate-dependent enzymes, thereby converting the octanoylated domains into lipoylated derivatives. This chain is Lipoyl synthase, found in Neisseria meningitidis serogroup B (strain ATCC BAA-335 / MC58).